A 409-amino-acid chain; its full sequence is uncharacterized protein (409 aa).

His-46 contributes to the Zn(2+) binding site. Glu-49 serves as the catalytic Proton acceptor. Zn(2+) contacts are provided by His-50 and Glu-126.

It belongs to the peptidase M16 family. Requires Zn(2+) as cofactor.

This is an uncharacterized protein from Bacillus subtilis (strain 168).